A 100-amino-acid chain; its full sequence is MEYGSTKMEERLSRSPGGKLALWAFYTWCGYFVWAMARYIWVMSRIPDAPVSGFESDLGSTAGKWLGALVGFLFMALVGALLGSIAWYTRPRPARSRRYE.

Over 1 to 16 the chain is Cytoplasmic; sequence MEYGSTKMEERLSRSP. A helical membrane pass occupies residues 17–37; it reads GGKLALWAFYTWCGYFVWAMA. The Periplasmic portion of the chain corresponds to 38-64; the sequence is RYIWVMSRIPDAPVSGFESDLGSTAGK. A helical membrane pass occupies residues 65–85; it reads WLGALVGFLFMALVGALLGSI. Residues 86–100 are Cytoplasmic-facing; the sequence is AWYTRPRPARSRRYE.

This sequence belongs to the DrpB family. Bacterial adenylate cyclase hybrid (BACTH) studies show interaction of this protein with DamX, FtsI, FtsN, FtsQ, YmgF, DedD, FtsA and MalF, as well as weaker interactions with DedD, MalG and PBP2, but this assay often generates false positive results.

It localises to the cell inner membrane. Functionally, a non-essential division protein that localizes to the septal ring in low ionic strength medium. Localizes to the septal ring in about 30% of observed cells before cell constriction occurs; localization occurs in low ionic strength medium (0 NaCl) and requires FtsZ but not FtsEX. Overexpression partially restores correct FtsI localization to the division septum in an ftsEX deletion. Isolated as a multicopy suppressor of an ftsEX deletion mutant; it does not suppress other cell division defects (e.g. ftsA, ftsI, ftsQ or ftsZ). This Escherichia coli (strain K12) protein is Cell division protein DrpB.